The primary structure comprises 248 residues: Pulmonary surfactant-associated protein A (248 aa).

The signal sequence occupies residues 1–20 (MSLCSLAFTLFLTVVAGIKC). One can recognise a Collagen-like domain in the interval 28–100 (GSPGIPGAPG…PGERGLPGFP (73 aa)). A 4-hydroxyproline mark is found at P30, P33, P36, P42, P54, P57, P63, P67, P70, and P76. The disordered stretch occupies residues 31-99 (GIPGAPGNHG…EPGERGLPGF (69 aa)). Positions 42-51 (PGRDGRDGVK) are enriched in basic and acidic residues. Residues 54–65 (PGPPGPMGPPGG) show a composition bias toward pro residues. Positions 69-82 (LPGRDGLPGAPGAP) are enriched in low complexity. Residues 84-93 (ERGDKGEPGE) are compositionally biased toward basic and acidic residues. Residues 133–248 (SVGDKVFSTN…LQYRLAVCEF (116 aa)) enclose the C-type lectin domain. 2 disulfides stabilise this stretch: C155–C246 and C224–C238. A glycan (N-linked (GlcNAc...) asparagine) is linked at N207. Ca(2+) is bound by residues E215, R217, N234, and D235.

Belongs to the SFTPA family. Oligomeric complex of 6 set of homotrimers.

It localises to the secreted. It is found in the extracellular space. The protein resides in the extracellular matrix. The protein localises to the surface film. Its function is as follows. In presence of calcium ions, it binds to surfactant phospholipids and contributes to lower the surface tension at the air-liquid interface in the alveoli of the mammalian lung and is essential for normal respiration. Enhances the expression of MYO18A/SP-R210 on alveolar macrophages. In Rattus norvegicus (Rat), this protein is Pulmonary surfactant-associated protein A (Sftpa1).